The chain runs to 208 residues: Outer-membrane lipoprotein carrier protein (208 aa).

Positions M1–A21 are cleaved as a signal peptide.

The protein belongs to the LolA family. As to quaternary structure, monomer.

Its subcellular location is the periplasm. In terms of biological role, participates in the translocation of lipoproteins from the inner membrane to the outer membrane. Only forms a complex with a lipoprotein if the residue after the N-terminal Cys is not an aspartate (The Asp acts as a targeting signal to indicate that the lipoprotein should stay in the inner membrane). This chain is Outer-membrane lipoprotein carrier protein, found in Halorhodospira halophila (strain DSM 244 / SL1) (Ectothiorhodospira halophila (strain DSM 244 / SL1)).